Here is a 142-residue protein sequence, read N- to C-terminus: Nucleoside diphosphate kinase (142 aa).

ATP is bound by residues Lys-11, Phe-59, Arg-87, Thr-93, Arg-104, and Asn-114. His-117 acts as the Pros-phosphohistidine intermediate in catalysis.

Belongs to the NDK family. As to quaternary structure, homotetramer. It depends on Mg(2+) as a cofactor.

The protein resides in the cytoplasm. It catalyses the reaction a 2'-deoxyribonucleoside 5'-diphosphate + ATP = a 2'-deoxyribonucleoside 5'-triphosphate + ADP. The enzyme catalyses a ribonucleoside 5'-diphosphate + ATP = a ribonucleoside 5'-triphosphate + ADP. Major role in the synthesis of nucleoside triphosphates other than ATP. The ATP gamma phosphate is transferred to the NDP beta phosphate via a ping-pong mechanism, using a phosphorylated active-site intermediate. The chain is Nucleoside diphosphate kinase from Aeromonas hydrophila subsp. hydrophila (strain ATCC 7966 / DSM 30187 / BCRC 13018 / CCUG 14551 / JCM 1027 / KCTC 2358 / NCIMB 9240 / NCTC 8049).